We begin with the raw amino-acid sequence, 143 residues long: Large ribosomal subunit protein uL11 (143 aa).

It belongs to the universal ribosomal protein uL11 family. In terms of assembly, part of the ribosomal stalk of the 50S ribosomal subunit. Interacts with L10 and the large rRNA to form the base of the stalk. L10 forms an elongated spine to which L12 dimers bind in a sequential fashion forming a multimeric L10(L12)X complex. One or more lysine residues are methylated.

In terms of biological role, forms part of the ribosomal stalk which helps the ribosome interact with GTP-bound translation factors. The chain is Large ribosomal subunit protein uL11 from Beutenbergia cavernae (strain ATCC BAA-8 / DSM 12333 / CCUG 43141 / JCM 11478 / NBRC 16432 / NCIMB 13614 / HKI 0122).